Consider the following 69-residue polypeptide: U-Asilidin(12)-Dg3b (69 aa).

A signal peptide spans 1-19; that stretch reads MRFLNIFLFFAVMIAFVSA. Positions 20-33 are excised as a propeptide; it reads SPVLEEEEIDIEPR. Intrachain disulfides connect Cys36-Cys59, Cys45-Cys65, and Cys49-Cys67.

Belongs to the asilidin-12 family. In terms of tissue distribution, expressed by the venom gland.

It is found in the secreted. The recombinant peptide moderately increases Kv11.1/KCNH2/ERG1 currents and shifts the voltage-dependence of the channel activation to hyperpolarised potentials. In vivo, induces neurotoxic effects when injected into insects (tested on L.cuprina and A.domesticus). The chain is U-Asilidin(12)-Dg3b from Dolopus genitalis (Giant Australian assassin fly).